The primary structure comprises 491 residues: Ketol-acid reductoisomerase (NADP(+)) (491 aa).

Positions 15–208 (AQLGKCRFMG…GGHRAGVLES (194 aa)) constitute a KARI N-terminal Rossmann domain. NADP(+) is bound by residues 45 to 48 (CGAQ), Arg-68, Arg-76, Ser-78, and 108 to 110 (DKQ). His-132 is a catalytic residue. Gly-158 provides a ligand contact to NADP(+). KARI C-terminal knotted domains follow at residues 209–344 (SFVA…TAPQ) and 345–484 (FEGK…MTDM). Mg(2+) is bound by residues Asp-217, Glu-221, Glu-389, and Glu-393. Ser-414 provides a ligand contact to substrate.

It belongs to the ketol-acid reductoisomerase family. Mg(2+) serves as cofactor.

The catalysed reaction is (2R)-2,3-dihydroxy-3-methylbutanoate + NADP(+) = (2S)-2-acetolactate + NADPH + H(+). The enzyme catalyses (2R,3R)-2,3-dihydroxy-3-methylpentanoate + NADP(+) = (S)-2-ethyl-2-hydroxy-3-oxobutanoate + NADPH + H(+). It participates in amino-acid biosynthesis; L-isoleucine biosynthesis; L-isoleucine from 2-oxobutanoate: step 2/4. Its pathway is amino-acid biosynthesis; L-valine biosynthesis; L-valine from pyruvate: step 2/4. Involved in the biosynthesis of branched-chain amino acids (BCAA). Catalyzes an alkyl-migration followed by a ketol-acid reduction of (S)-2-acetolactate (S2AL) to yield (R)-2,3-dihydroxy-isovalerate. In the isomerase reaction, S2AL is rearranged via a Mg-dependent methyl migration to produce 3-hydroxy-3-methyl-2-ketobutyrate (HMKB). In the reductase reaction, this 2-ketoacid undergoes a metal-dependent reduction by NADPH to yield (R)-2,3-dihydroxy-isovalerate. In Salmonella schwarzengrund (strain CVM19633), this protein is Ketol-acid reductoisomerase (NADP(+)).